The primary structure comprises 359 residues: 3-dehydroquinate synthase (359 aa).

NAD(+)-binding positions include 71-76 (DGEAHK), 105-109 (GVIGD), 129-130 (TT), Lys142, Lys151, and 169-172 (TLHT). Zn(2+) is bound by residues Glu184, His247, and His264.

Belongs to the sugar phosphate cyclases superfamily. Dehydroquinate synthase family. The cofactor is Co(2+). Zn(2+) is required as a cofactor. Requires NAD(+) as cofactor.

It is found in the cytoplasm. The enzyme catalyses 7-phospho-2-dehydro-3-deoxy-D-arabino-heptonate = 3-dehydroquinate + phosphate. The protein operates within metabolic intermediate biosynthesis; chorismate biosynthesis; chorismate from D-erythrose 4-phosphate and phosphoenolpyruvate: step 2/7. Functionally, catalyzes the conversion of 3-deoxy-D-arabino-heptulosonate 7-phosphate (DAHP) to dehydroquinate (DHQ). In Neisseria gonorrhoeae (strain ATCC 700825 / FA 1090), this protein is 3-dehydroquinate synthase.